A 215-amino-acid polypeptide reads, in one-letter code: Pyridoxine/pyridoxamine 5'-phosphate oxidase (215 aa).

Substrate contacts are provided by residues 9 to 12 (RRDY) and lysine 69. FMN is bound by residues 64 to 69 (RVLLLK), 79 to 80 (FT), lysine 86, and glutamine 108. Positions 126, 130, and 134 each coordinate substrate. FMN-binding positions include 143–144 (QS) and tryptophan 188. 194 to 196 (RLH) lines the substrate pocket. An FMN-binding site is contributed by arginine 198.

This sequence belongs to the pyridoxamine 5'-phosphate oxidase family. As to quaternary structure, homodimer. FMN is required as a cofactor.

It carries out the reaction pyridoxamine 5'-phosphate + O2 + H2O = pyridoxal 5'-phosphate + H2O2 + NH4(+). The enzyme catalyses pyridoxine 5'-phosphate + O2 = pyridoxal 5'-phosphate + H2O2. It functions in the pathway cofactor metabolism; pyridoxal 5'-phosphate salvage; pyridoxal 5'-phosphate from pyridoxamine 5'-phosphate: step 1/1. The protein operates within cofactor metabolism; pyridoxal 5'-phosphate salvage; pyridoxal 5'-phosphate from pyridoxine 5'-phosphate: step 1/1. Its function is as follows. Catalyzes the oxidation of either pyridoxine 5'-phosphate (PNP) or pyridoxamine 5'-phosphate (PMP) into pyridoxal 5'-phosphate (PLP). The polypeptide is Pyridoxine/pyridoxamine 5'-phosphate oxidase (Pseudomonas putida (strain GB-1)).